The following is a 315-amino-acid chain: Olfactory receptor 2V1 (315 aa).

Helical transmembrane passes span 31-51 (TVML…LLIY), 59-79 (PMYF…CNIV), 100-120 (IQIG…GLMA), 145-165 (IAGS…VAAM), 196-216 (FDTL…SIIV), 239-259 (LATC…AMFI), and 273-293 (KVVS…IYSL). Residues C98 and C180 are joined by a disulfide bond.

The protein belongs to the G-protein coupled receptor 1 family.

Its subcellular location is the cell membrane. Its function is as follows. Odorant receptor. Activated by (+) and (-)-limonene. This chain is Olfactory receptor 2V1, found in Mus musculus (Mouse).